Here is a 212-residue protein sequence, read N- to C-terminus: Large ribosomal subunit protein uL4 (212 aa).

The span at 54-65 (SQKSRSDVSGSN) shows a compositional bias: polar residues. Residues 54-85 (SQKSRSDVSGSNKKPWRQKGTGRARSGSVKSP) form a disordered region.

This sequence belongs to the universal ribosomal protein uL4 family. As to quaternary structure, part of the 50S ribosomal subunit.

Functionally, one of the primary rRNA binding proteins, this protein initially binds near the 5'-end of the 23S rRNA. It is important during the early stages of 50S assembly. It makes multiple contacts with different domains of the 23S rRNA in the assembled 50S subunit and ribosome. Its function is as follows. Forms part of the polypeptide exit tunnel. The sequence is that of Large ribosomal subunit protein uL4 from Blochmanniella floridana.